Reading from the N-terminus, the 327-residue chain is Mitochondrial coenzyme A transporter SLC25A42 (327 aa).

Solcar repeat units lie at residues 34 to 120 (KSVL…YKKL), 132 to 217 (LTPI…LKKL), and 227 to 315 (PYTF…TQIL). A run of 6 helical transmembrane segments spans residues 36 to 56 (VLNSLTSGALAGAVAKTAVAP), 92 to 112 (LWRGNSATMVRVIPYAAIQFC), 138 to 158 (LLAGALAGTTATLLTYPLDLV), 192 to 209 (GFTPTVLGVIPYAGISFF), 233 to 253 (LLFGACAGLFGQSSSYPLDVV), and 296 to 316 (VKGPVAVGISFTTFDLTQILL).

Belongs to the mitochondrial carrier (TC 2.A.29) family.

It is found in the mitochondrion inner membrane. It carries out the reaction ADP(out) + CoA(in) = ADP(in) + CoA(out). It catalyses the reaction 3'-dephospho-CoA(in) + ADP(out) = 3'-dephospho-CoA(out) + ADP(in). The enzyme catalyses adenosine 3',5'-bisphosphate(in) + ADP(out) = adenosine 3',5'-bisphosphate(out) + ADP(in). The catalysed reaction is AMP(in) + ADP(out) = AMP(out) + ADP(in). It carries out the reaction dADP(in) + ADP(out) = dADP(out) + ADP(in). It catalyses the reaction ADP(in) + ATP(out) = ADP(out) + ATP(in). Mitochondrial carrier mediating the transport of coenzyme A (CoA) in mitochondria in exchange for intramitochondrial (deoxy)adenine nucleotides and adenosine 3',5'-diphosphate. This chain is Mitochondrial coenzyme A transporter SLC25A42 (slc25a42), found in Xenopus laevis (African clawed frog).